Here is a 70-residue protein sequence, read N- to C-terminus: Cold shock-like protein CspG (70 aa).

The CSD domain occupies 7-67; the sequence is GLVKWFNADK…GQRGPAAANV (61 aa).

The protein localises to the cytoplasm. This chain is Cold shock-like protein CspG (cspG), found in Escherichia coli O157:H7.